The following is a 499-amino-acid chain: Protein nucleotidyltransferase YdiU (499 aa).

ATP contacts are provided by glycine 95, glycine 97, arginine 98, lysine 117, aspartate 129, glycine 130, arginine 180, and arginine 187. The Proton acceptor role is filled by aspartate 256. The Mg(2+) site is built by asparagine 257 and aspartate 266. Aspartate 266 is a binding site for ATP.

It belongs to the SELO family. Requires Mg(2+) as cofactor. The cofactor is Mn(2+).

It catalyses the reaction L-seryl-[protein] + ATP = 3-O-(5'-adenylyl)-L-seryl-[protein] + diphosphate. The catalysed reaction is L-threonyl-[protein] + ATP = 3-O-(5'-adenylyl)-L-threonyl-[protein] + diphosphate. The enzyme catalyses L-tyrosyl-[protein] + ATP = O-(5'-adenylyl)-L-tyrosyl-[protein] + diphosphate. It carries out the reaction L-histidyl-[protein] + UTP = N(tele)-(5'-uridylyl)-L-histidyl-[protein] + diphosphate. It catalyses the reaction L-seryl-[protein] + UTP = O-(5'-uridylyl)-L-seryl-[protein] + diphosphate. The catalysed reaction is L-tyrosyl-[protein] + UTP = O-(5'-uridylyl)-L-tyrosyl-[protein] + diphosphate. Functionally, nucleotidyltransferase involved in the post-translational modification of proteins. It can catalyze the addition of adenosine monophosphate (AMP) or uridine monophosphate (UMP) to a protein, resulting in modifications known as AMPylation and UMPylation. The protein is Protein nucleotidyltransferase YdiU of Dechloromonas aromatica (strain RCB).